We begin with the raw amino-acid sequence, 284 residues long: ATP synthase subunit beta, chloroplastic (284 aa).

Belongs to the ATPase alpha/beta chains family. In terms of assembly, F-type ATPases have 2 components, CF(1) - the catalytic core - and CF(0) - the membrane proton channel. CF(1) has five subunits: alpha(3), beta(3), gamma(1), delta(1), epsilon(1). CF(0) has four main subunits: a(1), b(1), b'(1) and c(9-12).

The protein resides in the plastid. It is found in the chloroplast thylakoid membrane. It catalyses the reaction ATP + H2O + 4 H(+)(in) = ADP + phosphate + 5 H(+)(out). Its function is as follows. Produces ATP from ADP in the presence of a proton gradient across the membrane. The catalytic sites are hosted primarily by the beta subunits. This is ATP synthase subunit beta, chloroplastic (atpB) from Asplenium nidus (Bird's nest fern).